The following is a 276-amino-acid chain: uncharacterized protein (276 aa).

The active-site Proton donor is the Tyr-47. A substrate-binding site is contributed by His-110.

The protein belongs to the aldo/keto reductase family.

The protein localises to the cytoplasm. It is found in the nucleus. This is an uncharacterized protein from Schizosaccharomyces pombe (strain 972 / ATCC 24843) (Fission yeast).